We begin with the raw amino-acid sequence, 407 residues long: Probable tRNA sulfurtransferase (407 aa).

The THUMP domain occupies 61–165 (NEITYRLSKI…LDAIYMYEEV (105 aa)). ATP contacts are provided by residues 183–184 (ML), 208–209 (HF), R265, G287, and Q296.

The protein belongs to the ThiI family.

It localises to the cytoplasm. It carries out the reaction [ThiI sulfur-carrier protein]-S-sulfanyl-L-cysteine + a uridine in tRNA + 2 reduced [2Fe-2S]-[ferredoxin] + ATP + H(+) = [ThiI sulfur-carrier protein]-L-cysteine + a 4-thiouridine in tRNA + 2 oxidized [2Fe-2S]-[ferredoxin] + AMP + diphosphate. The enzyme catalyses [ThiS sulfur-carrier protein]-C-terminal Gly-Gly-AMP + S-sulfanyl-L-cysteinyl-[cysteine desulfurase] + AH2 = [ThiS sulfur-carrier protein]-C-terminal-Gly-aminoethanethioate + L-cysteinyl-[cysteine desulfurase] + A + AMP + 2 H(+). It functions in the pathway cofactor biosynthesis; thiamine diphosphate biosynthesis. In terms of biological role, catalyzes the ATP-dependent transfer of a sulfur to tRNA to produce 4-thiouridine in position 8 of tRNAs, which functions as a near-UV photosensor. Also catalyzes the transfer of sulfur to the sulfur carrier protein ThiS, forming ThiS-thiocarboxylate. This is a step in the synthesis of thiazole, in the thiamine biosynthesis pathway. The sulfur is donated as persulfide by IscS. The polypeptide is Probable tRNA sulfurtransferase (Staphylococcus aureus (strain N315)).